Reading from the N-terminus, the 376-residue chain is 4-hydroxy-3-methylbut-2-en-1-yl diphosphate synthase (flavodoxin) (376 aa).

[4Fe-4S] cluster is bound by residues cysteine 270, cysteine 273, cysteine 305, and glutamate 312.

This sequence belongs to the IspG family. Requires [4Fe-4S] cluster as cofactor.

The enzyme catalyses (2E)-4-hydroxy-3-methylbut-2-enyl diphosphate + oxidized [flavodoxin] + H2O + 2 H(+) = 2-C-methyl-D-erythritol 2,4-cyclic diphosphate + reduced [flavodoxin]. It functions in the pathway isoprenoid biosynthesis; isopentenyl diphosphate biosynthesis via DXP pathway; isopentenyl diphosphate from 1-deoxy-D-xylulose 5-phosphate: step 5/6. Converts 2C-methyl-D-erythritol 2,4-cyclodiphosphate (ME-2,4cPP) into 1-hydroxy-2-methyl-2-(E)-butenyl 4-diphosphate. This Colwellia psychrerythraea (strain 34H / ATCC BAA-681) (Vibrio psychroerythus) protein is 4-hydroxy-3-methylbut-2-en-1-yl diphosphate synthase (flavodoxin).